Consider the following 223-residue polypeptide: Endonuclease III (223 aa).

In terms of domain architecture, HhH spans 118-137 (RDFLTAIEGIGDKTADVVLL). Residues cysteine 198, cysteine 205, cysteine 208, and cysteine 214 each coordinate [4Fe-4S] cluster.

Belongs to the Nth/MutY family. The cofactor is [4Fe-4S] cluster.

It catalyses the reaction 2'-deoxyribonucleotide-(2'-deoxyribose 5'-phosphate)-2'-deoxyribonucleotide-DNA = a 3'-end 2'-deoxyribonucleotide-(2,3-dehydro-2,3-deoxyribose 5'-phosphate)-DNA + a 5'-end 5'-phospho-2'-deoxyribonucleoside-DNA + H(+). In terms of biological role, probably part of a 4-gene DNA damage response locus in which the upstream ups system, in combination with this downstream locus, functions in homologous recombination to rescue Sulfolobales from DNA-damaging threats. DNA repair enzyme that has both DNA N-glycosylase activity and AP-lyase activity. The DNA N-glycosylase activity releases various damaged pyrimidines from DNA by cleaving the N-glycosidic bond, leaving an AP (apurinic/apyrimidinic) site. The AP-lyase activity cleaves the phosphodiester bond 3' to the AP site by a beta-elimination, leaving a 3'-terminal unsaturated sugar and a product with a terminal 5'-phosphate. Nicks UV-treated plasmid DNA in a dose-dependent manner, has no activity on untreated DNA. This is Endonuclease III from Sulfolobus acidocaldarius (strain ATCC 33909 / DSM 639 / JCM 8929 / NBRC 15157 / NCIMB 11770).